Here is a 639-residue protein sequence, read N- to C-terminus: Wall-associated receptor kinase-like 15 (639 aa).

The first 25 residues, 1–25, serve as a signal peptide directing secretion; it reads MELPWLSLTTFTLSLLIYFSSTTQA. Topologically, residues 26–282 are extracellular; it reads FKRCPNCGST…KRKSCKRWSN (257 aa). 5 N-linked (GlcNAc...) asparagine glycosylation sites follow: asparagine 68, asparagine 115, asparagine 126, asparagine 141, and asparagine 241. A helical transmembrane segment spans residues 283–303; the sequence is LPLLGGLAGGVGAILIAGFIT. Residues 304–639 lie on the Cytoplasmic side of the membrane; that stretch reads KTIVSKQNRR…KEIENILHGI (336 aa). Positions 354-639 constitute a Protein kinase domain; it reads FAKSNLLGFG…KEIENILHGI (286 aa). ATP contacts are provided by residues 360-368 and lysine 382; that span reads LGFGGFGEV. Catalysis depends on aspartate 484, which acts as the Proton acceptor.

The protein belongs to the protein kinase superfamily. Ser/Thr protein kinase family.

It is found in the membrane. The enzyme catalyses L-seryl-[protein] + ATP = O-phospho-L-seryl-[protein] + ADP + H(+). It catalyses the reaction L-threonyl-[protein] + ATP = O-phospho-L-threonyl-[protein] + ADP + H(+). Putative serine/threonine-protein kinase that may function as a signaling receptor of extracellular matrix component. This Arabidopsis thaliana (Mouse-ear cress) protein is Wall-associated receptor kinase-like 15 (WAKL15).